A 374-amino-acid polypeptide reads, in one-letter code: Alcohol dehydrogenase 1 (374 aa).

Ser-1 is modified (N-acetylserine). Residues Cys-46, His-67, Cys-97, Cys-100, Cys-103, Cys-111, and Cys-174 each contribute to the Zn(2+) site. NAD(+)-binding positions include 199 to 204 (GLGGVG), Asp-223, Lys-228, 292 to 294 (VGV), and Arg-369.

It belongs to the zinc-containing alcohol dehydrogenase family. Class-I subfamily. The cofactor is Zn(2+).

The protein resides in the cytoplasm. The catalysed reaction is a primary alcohol + NAD(+) = an aldehyde + NADH + H(+). It carries out the reaction a secondary alcohol + NAD(+) = a ketone + NADH + H(+). This chain is Alcohol dehydrogenase 1, found in Alligator mississippiensis (American alligator).